The sequence spans 341 residues: Methionine import ATP-binding protein MetN 1 (341 aa).

The ABC transporter domain occupies 2-241; the sequence is IEFRQVSKSF…PKTTIAQNFV (240 aa). 38-45 is a binding site for ATP; sequence GYSGAGKS.

Belongs to the ABC transporter superfamily. Methionine importer (TC 3.A.1.24) family. The complex is composed of two ATP-binding proteins (MetN), two transmembrane proteins (MetI) and a solute-binding protein (MetQ).

The protein resides in the cell membrane. The enzyme catalyses L-methionine(out) + ATP + H2O = L-methionine(in) + ADP + phosphate + H(+). The catalysed reaction is D-methionine(out) + ATP + H2O = D-methionine(in) + ADP + phosphate + H(+). In terms of biological role, part of the ABC transporter complex MetNIQ involved in methionine import. Responsible for energy coupling to the transport system. The sequence is that of Methionine import ATP-binding protein MetN 1 from Staphylococcus aureus (strain bovine RF122 / ET3-1).